A 100-amino-acid polypeptide reads, in one-letter code: Vesicle-associated membrane protein 3 (100 aa).

Position 2 is an N-acetylserine (serine 2). Residues 2–77 lie on the Cytoplasmic side of the membrane; sequence STGPTAATGS…KRKYWWKNCK (76 aa). The 61-residue stretch at 14–74 folds into the v-SNARE coiled-coil homology domain; the sequence is RLQQTQNQVD…AKLKRKYWWK (61 aa). Glycyl lysine isopeptide (Lys-Gly) (interchain with G-Cter in ubiquitin) cross-links involve residues lysine 66, lysine 68, and lysine 77. A helical; Anchor for type IV membrane protein membrane pass occupies residues 78–98; that stretch reads MWAIGITVLVIFIIIIIVWVV. Residues 99–100 are Vesicular-facing; sequence SS.

This sequence belongs to the synaptobrevin family. Interacts with POPDC1 (via the C-terminus cytoplasmic tail). Interacts with BCAP31; involved in VAMP3 export from the endoplasmic reticulum. Interacts with BAIAP3; this interaction is increased in the presence of calcium. Interacts with PICALM. Post-translationally, ubiquitinated by RNF167 at Lys-66, Lys-68 and Lys-77, regulating the recycling endosome pathway. In terms of processing, (Microbial infection) Targeted and hydrolyzed by C.botulinum neurotoxin type B (BoNT/B, botB) which hydrolyzes the 59-Gln-|-Phe-60 bond and probably inhibits neurotransmitter release. (Microbial infection) Targeted and hydrolyzed by C.botulinum neurotoxin type D (BoNT/D, botD) which hydrolyzes the 42-Lys-|-Leu-43 bond and probably inhibits neurotransmitter release. Note that humans are not known to be infected by C.botulinum type D. Post-translationally, (Microbial infection) Targeted and hydrolyzed by C.botulinum neurotoxin type F (BoNT/F, botF) which hydrolyzes the 41-Gln-|-Lys-42 bond and probably inhibits neurotransmitter release.

It is found in the early endosome membrane. Its subcellular location is the recycling endosome membrane. It localises to the synapse. The protein localises to the synaptosome. Functionally, SNARE involved in vesicular transport from the late endosomes to the trans-Golgi network. This chain is Vesicle-associated membrane protein 3 (VAMP3), found in Homo sapiens (Human).